The following is a 455-amino-acid chain: DNA repair protein RadA (455 aa).

The C4-type zinc-finger motif lies at 12-29 (CSECGSYSPKWLGQCPGC). 95–102 (GEPGIGKS) contacts ATP. A RadA KNRFG motif motif is present at residues 252 to 256 (KNRFG). The interval 351-455 (DVFLSIAGGL…TIKDAVRLLQ (105 aa)) is lon-protease-like.

The protein belongs to the RecA family. RadA subfamily.

Functionally, DNA-dependent ATPase involved in processing of recombination intermediates, plays a role in repairing DNA breaks. Stimulates the branch migration of RecA-mediated strand transfer reactions, allowing the 3' invading strand to extend heteroduplex DNA faster. Binds ssDNA in the presence of ADP but not other nucleotides, has ATPase activity that is stimulated by ssDNA and various branched DNA structures, but inhibited by SSB. Does not have RecA's homology-searching function. The sequence is that of DNA repair protein RadA from Chlamydia muridarum (strain MoPn / Nigg).